We begin with the raw amino-acid sequence, 753 residues long: Probable TonB-dependent siderophore receptor PiuA (753 aa).

The first 35 residues, 1–35, serve as a signal peptide directing secretion; it reads MSRQSTDTAVSSQRLLASAIGVAITAIAAPQAAQA. The region spanning 79–185 is the TBDR plug domain; sequence PLLDTPKTVT…TGGSLNLISK (107 aa). The region spanning 190 to 753 is the TBDR beta-barrel domain; that stretch reads DNFTDAGFTW…TALLGVNFHF (564 aa). C420 and C430 are disulfide-bonded.

It belongs to the TonB-dependent receptor family.

The protein resides in the cell outer membrane. Functionally, involved in the initial step of iron uptake by binding iron chelating siderophores, thereby allowing extraction of iron from the environment. Probably involved in the transport of siderophores, including host catecholamines such as dopamine. The polypeptide is Probable TonB-dependent siderophore receptor PiuA (Pseudomonas aeruginosa (strain ATCC 15692 / DSM 22644 / CIP 104116 / JCM 14847 / LMG 12228 / 1C / PRS 101 / PAO1)).